The chain runs to 304 residues: Ubiquitin thioesterase OTU1 (304 aa).

The UBX-like stretch occupies residues 5–83 (RCKTREGTQL…IVEEDKSKLR (79 aa)). Positions 105–230 (IVRRVVPADN…GIHYDPLQRQ (126 aa)) constitute an OTU domain. The tract at residues 110-116 (VPADNSC) is cys-loop. The active site involves Asp-113. Cys-116 functions as the Nucleophile in the catalytic mechanism. The interval 169–179 (IRREDTWGGAI) is variable-loop. Positions 219-223 (YDGIH) are his-loop. Ile-222 is a substrate binding site. Residue His-223 is part of the active site. Positions 247 to 252 (DEALVQ) are S2 site. The C2H2-type zinc finger occupies 274-298 (LRCMACQKGLTGQSAARDHAKETGH). His-298 is an active-site residue.

It localises to the cytoplasm. It carries out the reaction Thiol-dependent hydrolysis of ester, thioester, amide, peptide and isopeptide bonds formed by the C-terminal Gly of ubiquitin (a 76-residue protein attached to proteins as an intracellular targeting signal).. Functionally, hydrolase that can remove conjugated ubiquitin from proteins and participates in endoplasmic reticulum-associated degradation (ERAD) for misfolded lumenal proteins. May act by triming the ubiquitin chain on the associated substrate to facilitate their threading through the VCP/p97 pore. Ubiquitin moieties on substrates may present a steric impediment to the threading process when the substrate is transferred to the VCP pore and threaded through VCP's axial channel. Mediates deubiquitination of 'Lys-27'-, 'Lys-29'- and 'Lys-33'-linked polyubiquitin chains. Also able to hydrolyze 'Lys-11'-linked ubiquitin chains. Cleaves both polyubiquitin and di-ubiquitin. The protein is Ubiquitin thioesterase OTU1 (yod1) of Xenopus laevis (African clawed frog).